A 492-amino-acid polypeptide reads, in one-letter code: Protein nucleotidyltransferase YdiU (492 aa).

ATP contacts are provided by G94, G96, R97, K117, D129, G130, R180, and R187. D257 acts as the Proton acceptor in catalysis. The Mg(2+) site is built by N258 and D267. D267 lines the ATP pocket.

It belongs to the SELO family. Mg(2+) serves as cofactor. The cofactor is Mn(2+).

The catalysed reaction is L-seryl-[protein] + ATP = 3-O-(5'-adenylyl)-L-seryl-[protein] + diphosphate. The enzyme catalyses L-threonyl-[protein] + ATP = 3-O-(5'-adenylyl)-L-threonyl-[protein] + diphosphate. It catalyses the reaction L-tyrosyl-[protein] + ATP = O-(5'-adenylyl)-L-tyrosyl-[protein] + diphosphate. It carries out the reaction L-histidyl-[protein] + UTP = N(tele)-(5'-uridylyl)-L-histidyl-[protein] + diphosphate. The catalysed reaction is L-seryl-[protein] + UTP = O-(5'-uridylyl)-L-seryl-[protein] + diphosphate. The enzyme catalyses L-tyrosyl-[protein] + UTP = O-(5'-uridylyl)-L-tyrosyl-[protein] + diphosphate. In terms of biological role, nucleotidyltransferase involved in the post-translational modification of proteins. It can catalyze the addition of adenosine monophosphate (AMP) or uridine monophosphate (UMP) to a protein, resulting in modifications known as AMPylation and UMPylation. The polypeptide is Protein nucleotidyltransferase YdiU (Halalkalibacterium halodurans (strain ATCC BAA-125 / DSM 18197 / FERM 7344 / JCM 9153 / C-125) (Bacillus halodurans)).